Reading from the N-terminus, the 639-residue chain is Putative cyclic beta-1,2-glucan modification protein (639 aa).

6 helical membrane-spanning segments follow: residues 34–54, 69–89, 96–116, 144–164, 185–205, and 227–247; these read ALFTLLIAIALVFTVEVIVRW, PAWTTVAVFFLAMLGVDALFG, LLIAPLAVVPAFISQQKQVFL, WTAVGVVAGLIAAIVVGALLL, FALPLLVAFWNIMDYNQFSWI, and FALAFAINLPMANVNAPAGYM.

Its subcellular location is the cell membrane. The sequence is that of Putative cyclic beta-1,2-glucan modification protein (cgmA) from Rhizobium meliloti (strain 1021) (Ensifer meliloti).